Reading from the N-terminus, the 511-residue chain is Putative thymidine phosphorylase 1 (511 aa).

This sequence belongs to the thymidine/pyrimidine-nucleoside phosphorylase family. Type 2 subfamily.

The enzyme catalyses thymidine + phosphate = 2-deoxy-alpha-D-ribose 1-phosphate + thymine. The sequence is that of Putative thymidine phosphorylase 1 from Acidovorax sp. (strain JS42).